The chain runs to 566 residues: ATP-dependent RNA helicase DBP3 (566 aa).

Residues 1 to 139 (MSAGKKHARD…TTPNGSAQRN (139 aa)) are disordered. A compositionally biased stretch (basic residues) spans 39 to 58 (DKKKKDKKDKKERKEKKEKK). Basic and acidic residues predominate over residues 81–91 (SEPKPEKEKKE). Residues 92–102 (KNNKKDKKDKK) show a composition bias toward basic residues. Over residues 127–139 (AATTTPNGSAQRN) the composition is skewed to polar residues. Positions 182 to 209 (IHFSHLPTSTLTSKKPFASFTAPTPIQA) match the Q motif motif. One can recognise a Helicase ATP-binding domain in the interval 212 to 396 (WPFALSGRDV…EGFMIDPVKA (185 aa)). 225–232 (AETGSGKT) serves as a coordination point for ATP. The DEAD box signature appears at 342-345 (DEAD). A Helicase C-terminal domain is found at 433-566 (GKEQRLLELL…TEHDKSHSGS (134 aa)).

Belongs to the DEAD box helicase family. DDX5/DBP2 subfamily.

It localises to the nucleus. Its subcellular location is the nucleolus. It carries out the reaction ATP + H2O = ADP + phosphate + H(+). ATP-dependent RNA helicase required for 60S ribosomal subunit synthesis. Involved in efficient pre-rRNA processing, predominantly at site A3, which is necessary for the normal formation of 25S and 5.8S rRNAs. The sequence is that of ATP-dependent RNA helicase DBP3 (DBP3) from Chaetomium globosum (strain ATCC 6205 / CBS 148.51 / DSM 1962 / NBRC 6347 / NRRL 1970) (Soil fungus).